A 481-amino-acid chain; its full sequence is Protein nucleotidyltransferase YdiU (481 aa).

Residues glycine 85, glycine 87, arginine 88, lysine 108, aspartate 120, glycine 121, arginine 171, and arginine 178 each contribute to the ATP site. Aspartate 248 (proton acceptor) is an active-site residue. Positions 249 and 258 each coordinate Mg(2+). Aspartate 258 is an ATP binding site. The tract at residues 458-481 is disordered; it reads HPGLAEFQQPPTPEQKGLQLSCSS.

Belongs to the SELO family. Requires Mg(2+) as cofactor. It depends on Mn(2+) as a cofactor.

It catalyses the reaction L-seryl-[protein] + ATP = 3-O-(5'-adenylyl)-L-seryl-[protein] + diphosphate. The catalysed reaction is L-threonyl-[protein] + ATP = 3-O-(5'-adenylyl)-L-threonyl-[protein] + diphosphate. The enzyme catalyses L-tyrosyl-[protein] + ATP = O-(5'-adenylyl)-L-tyrosyl-[protein] + diphosphate. It carries out the reaction L-histidyl-[protein] + UTP = N(tele)-(5'-uridylyl)-L-histidyl-[protein] + diphosphate. It catalyses the reaction L-seryl-[protein] + UTP = O-(5'-uridylyl)-L-seryl-[protein] + diphosphate. The catalysed reaction is L-tyrosyl-[protein] + UTP = O-(5'-uridylyl)-L-tyrosyl-[protein] + diphosphate. Nucleotidyltransferase involved in the post-translational modification of proteins. It can catalyze the addition of adenosine monophosphate (AMP) or uridine monophosphate (UMP) to a protein, resulting in modifications known as AMPylation and UMPylation. This chain is Protein nucleotidyltransferase YdiU, found in Hydrogenovibrio crunogenus (strain DSM 25203 / XCL-2) (Thiomicrospira crunogena).